Here is a 208-residue protein sequence, read N- to C-terminus: ATP-dependent Clp protease proteolytic subunit (208 aa).

Ser-98 functions as the Nucleophile in the catalytic mechanism. The active site involves His-123.

The protein belongs to the peptidase S14 family. As to quaternary structure, fourteen ClpP subunits assemble into 2 heptameric rings which stack back to back to give a disk-like structure with a central cavity, resembling the structure of eukaryotic proteasomes.

It localises to the cytoplasm. The catalysed reaction is Hydrolysis of proteins to small peptides in the presence of ATP and magnesium. alpha-casein is the usual test substrate. In the absence of ATP, only oligopeptides shorter than five residues are hydrolyzed (such as succinyl-Leu-Tyr-|-NHMec, and Leu-Tyr-Leu-|-Tyr-Trp, in which cleavage of the -Tyr-|-Leu- and -Tyr-|-Trp bonds also occurs).. Functionally, cleaves peptides in various proteins in a process that requires ATP hydrolysis. Has a chymotrypsin-like activity. Plays a major role in the degradation of misfolded proteins. The chain is ATP-dependent Clp protease proteolytic subunit from Wolbachia sp. subsp. Drosophila simulans (strain wRi).